Reading from the N-terminus, the 42-residue chain is uncharacterized protein (42 aa).

This is an uncharacterized protein from Dictyostelium discoideum (Social amoeba).